Here is a 431-residue protein sequence, read N- to C-terminus: STE20-related kinase adapter protein alpha (431 aa).

A phosphoserine mark is found at serine 2 and serine 46. The Protein kinase domain occupies 69 to 379 (YELLTVIGKG…ASTLLNHSFF (311 aa)). A disordered region spans residues 310–347 (LTMSPSRSVANSGLSDSLTTSTPRPSNGDSPSHPYHRT). Positions 312–339 (MSPSRSVANSGLSDSLTTSTPRPSNGDS) are enriched in polar residues. Phosphothreonine; by LKB1 is present on residues threonine 329 and threonine 401. Position 419 is a phosphothreonine (threonine 419).

This sequence belongs to the protein kinase superfamily. STE Ser/Thr protein kinase family. STE20 subfamily. In terms of assembly, component of a trimeric complex composed of STK11/LKB1, STRAD (STRADA or STRADB) and CAB39/MO25 (CAB39/MO25alpha or CAB39L/MO25beta): the complex tethers STK11/LKB1 in the cytoplasm and stimulates its catalytic activity.

Its subcellular location is the nucleus. The protein resides in the cytoplasm. Functionally, pseudokinase which, in complex with CAB39/MO25 (CAB39/MO25alpha or CAB39L/MO25beta), binds to and activates STK11/LKB1. Adopts a closed conformation typical of active protein kinases and binds STK11/LKB1 as a pseudosubstrate, promoting conformational change of STK11/LKB1 in an active conformation. In Pongo abelii (Sumatran orangutan), this protein is STE20-related kinase adapter protein alpha (STRADA).